Here is a 125-residue protein sequence, read N- to C-terminus: Ribosome-binding factor A (125 aa).

Belongs to the RbfA family. As to quaternary structure, monomer. Binds 30S ribosomal subunits, but not 50S ribosomal subunits or 70S ribosomes.

It localises to the cytoplasm. In terms of biological role, one of several proteins that assist in the late maturation steps of the functional core of the 30S ribosomal subunit. Associates with free 30S ribosomal subunits (but not with 30S subunits that are part of 70S ribosomes or polysomes). Required for efficient processing of 16S rRNA. May interact with the 5'-terminal helix region of 16S rRNA. The sequence is that of Ribosome-binding factor A from Paracidovorax citrulli (strain AAC00-1) (Acidovorax citrulli).